The primary structure comprises 758 residues: Vitamin K-dependent gamma-carboxylase (758 aa).

The tract at residues 1–29 (MAVHRGSARAAPASDKVQKNKPAQTSGLE) is disordered. Position 2 is an N-acetylalanine (A2). Residues 2-60 (AVHRGSARAAPASDKVQKNKPAQTSGLEQGSRMARIFGFEWADLSSWQSVVTLLNRPTD) are Cytoplasmic-facing. The helical transmembrane segment at 61 to 81 (PANLAVFRFLFAFLMLLDIPQ) threads the bilayer. Topologically, residues 82-113 (ERGLSSLDRKYLDGLDVCRFPLLDALRPLPLD) are lumenal. The cysteines at positions 99 and 450 are disulfide-linked. The chain crosses the membrane as a helical span at residues 114 to 134 (WMYLVYTIMFLGALGMMLGLW). At 135-136 (YR) the chain is on the cytoplasmic side. The chain crosses the membrane as a helical span at residues 137–157 (LSCMLFLLPYWYVFLLDKTSW). Topologically, residues 158–292 (NNHSYLYGLL…VSYFHCMNSQ (135 aa)) are lumenal. The helical transmembrane segment at 293-313 (LFSIGMFPYVMLASSPLFCSA) threads the bilayer. Topologically, residues 314–361 (EWPRKLVARCPKRLQELLPAKAAPRPSASCVYKRARAKAGQKPGLRHH) are cytoplasmic. A helical transmembrane segment spans residues 362–382 (LGTVFTLLYLLEQLFLPYSHF). Residues 383–758 (LTQGYNNWTN…PDSEHVHSEL (376 aa)) are Lumenal-facing. The tract at residues 727–758 (PFEPVDESSASNTDSSDPHPSEPDSEHVHSEL) is disordered. Residues 742–758 (SDPHPSEPDSEHVHSEL) show a composition bias toward basic and acidic residues.

Belongs to the vitamin K-dependent gamma-carboxylase family. In terms of assembly, monomer. Interacts with CALU.

The protein localises to the endoplasmic reticulum membrane. It carries out the reaction 4-carboxy-L-glutamyl-[protein] + 2,3-epoxyphylloquinone + H2O + H(+) = phylloquinol + L-glutamyl-[protein] + CO2 + O2. Functionally, mediates the vitamin K-dependent carboxylation of glutamate residues to calcium-binding gamma-carboxyglutamate (Gla) residues with the concomitant conversion of the reduced hydroquinone form of vitamin K to vitamin K epoxide. Catalyzes gamma-carboxylation of various proteins, such as blood coagulation factors (F2, F7, F9 and F10), osteocalcin (BGLAP) or matrix Gla protein (MGP). The polypeptide is Vitamin K-dependent gamma-carboxylase (Ggcx) (Rattus norvegicus (Rat)).